The sequence spans 412 residues: uncharacterized protein (412 aa).

Disordered stretches follow at residues Asn-150 to Asp-171, Gln-177 to Gln-196, and Gln-302 to Pro-412. A compositionally biased stretch (low complexity) spans Gln-156–Gln-168. Composition is skewed to polar residues over residues Gln-177 to Ser-187 and Met-310 to Ile-321. Over residues Gly-335 to Asn-345 the composition is skewed to low complexity. Residues Val-350–Leu-363 are compositionally biased toward polar residues. Composition is skewed to low complexity over residues Pro-364 to Pro-373 and Thr-381 to Pro-394.

This is an uncharacterized protein from Dictyostelium discoideum (Social amoeba).